Reading from the N-terminus, the 384-residue chain is N-acetylneuraminate epimerase (384 aa).

The signal sequence occupies residues 1 to 24; sequence MNMKTLLTYATLLSVTAFSHVVYA. Kelch repeat units follow at residues 46–90, 92–145, 147–184, 185–230, 233–281, 303–352, and 354–383; these read KVYV…SVIG, YIYL…YSPD, RQILFFGGYNKAYFDRYLRDISTTDKQVNPEVWQRIVD, DYMG…VIEG, VTLI…VAGA, QAFE…TTSE, and VLIVGGEKSGKEMSHKVYMLAWNGSTVEVI. Catalysis depends on glutamate 239, which acts as the Proton acceptor.

The protein belongs to the NanM family. Homodimer.

It localises to the periplasm. It carries out the reaction N-acetyl-alpha-neuraminate = N-acetyl-beta-neuraminate. Its function is as follows. Converts alpha-N-acetylneuranimic acid (Neu5Ac) to the beta-anomer, accelerating the equilibrium between the alpha- and beta-anomers. Probably facilitates sialidase-negative bacteria to compete successfully for limited amounts of extracellular Neu5Ac, which is likely taken up in the beta-anomer. In addition, the rapid removal of sialic acid from solution might be advantageous to the bacterium to damp down host responses. The chain is N-acetylneuraminate epimerase from Vibrio cholerae serotype O1 (strain ATCC 39315 / El Tor Inaba N16961).